Consider the following 1097-residue polypeptide: uncharacterized protein (1097 aa).

Residues 31-1087 (LLNVARQEEE…TALNKLRTRH (1057 aa)) are a coiled coil.

It belongs to the TRAFAC class myosin-kinesin ATPase superfamily. Myosin family. As to expression, specifically expressed in muscles of the head including temporalis and tensor veli palatini.

Its function is as follows. Has most probably lost the function in masticatory muscles contraction suspected for its homologs in dog (AC F1PT61) and apes. This is an uncharacterized protein from Homo sapiens (Human).